Reading from the N-terminus, the 500-residue chain is Mucin-like protein 3 (500 aa).

The N-terminal stretch at Met-1–Ala-27 is a signal peptide. Residues Gly-28 to Ala-429 lie on the Extracellular side of the membrane. Disordered stretches follow at residues Thr-55–Pro-198 and Glu-275–Ser-324. The segment covering Ala-58 to Asp-71 has biased composition (basic and acidic residues). A compositionally biased stretch (polar residues) spans Thr-76 to Arg-89. Residue Asn-108 is glycosylated (N-linked (GlcNAc...) asparagine). 2 stretches are compositionally biased toward basic and acidic residues: residues Val-111–Leu-123 and Ala-132–Arg-142. Residue Asn-148 is glycosylated (N-linked (GlcNAc...) asparagine). Polar residues-rich tracts occupy residues Pro-159–Ser-178, Ser-279–Gln-289, and Thr-298–Ser-324. The chain crosses the membrane as a helical span at residues Ile-430–Leu-450. The Cytoplasmic segment spans residues Val-451–Pro-500.

The protein localises to the cell membrane. The protein resides in the cytoplasm. Its function is as follows. May modulate NF-kappaB signaling and play a role in cell growth. The sequence is that of Mucin-like protein 3 from Mus musculus (Mouse).